We begin with the raw amino-acid sequence, 543 residues long: Cytochrome P450 52A1 (543 aa).

Residues 1-28 are Lumenal-facing; that stretch reads MSSSPSIAQEFLATITPYVEYCQENYTK. The helical transmembrane segment at 29–48 threads the bilayer; it reads WYYFIPLVILSLNLISMLHT. The Cytoplasmic segment spans residues 49-543; that stretch reads KYLERKFKAK…GAEVQMYLIL (495 aa). Cys487 lines the heme pocket.

Belongs to the cytochrome P450 family. Requires heme as cofactor.

Its subcellular location is the endoplasmic reticulum membrane. In terms of biological role, together with an NADPH cytochrome P450 the enzyme system catalyzes the terminal hydroxylation as the first step in the assimilation of alkanes and fatty acids. The protein is Cytochrome P450 52A1 (CYP52A1) of Candida tropicalis (Yeast).